Reading from the N-terminus, the 702-residue chain is Ribosomal RNA large subunit methyltransferase K/L (702 aa).

In terms of domain architecture, THUMP spans 43 to 154; the sequence is LIYQSLMWSR…KETASIALDL (112 aa).

Belongs to the methyltransferase superfamily. RlmKL family.

The protein localises to the cytoplasm. The catalysed reaction is guanosine(2445) in 23S rRNA + S-adenosyl-L-methionine = N(2)-methylguanosine(2445) in 23S rRNA + S-adenosyl-L-homocysteine + H(+). It carries out the reaction guanosine(2069) in 23S rRNA + S-adenosyl-L-methionine = N(2)-methylguanosine(2069) in 23S rRNA + S-adenosyl-L-homocysteine + H(+). Its function is as follows. Specifically methylates the guanine in position 2445 (m2G2445) and the guanine in position 2069 (m7G2069) of 23S rRNA. This chain is Ribosomal RNA large subunit methyltransferase K/L, found in Salmonella agona (strain SL483).